Consider the following 1948-residue polypeptide: Chromodomain-helicase-DNA-binding protein 5 (1948 aa).

Disordered stretches follow at residues Met1–Leu136, Ser228–Lys268, and Ser281–Tyr336. 2 stretches are compositionally biased toward acidic residues: residues Glu17–Glu37 and Asn71–Gly89. Basic residues-rich tracts occupy residues Thr95–Lys114 and Gly250–Lys268. Acidic residues predominate over residues Ser289–Leu299. Basic residues predominate over residues Lys319–Lys328. PHD-type zinc fingers lie at residues Gln341 to Glu388 and Met414 to Pro461. The segment at Gln341–Ala651 is histone-binding. In terms of domain architecture, Chromo 1 spans Met495–Phe552. Residues Asp547 to Lys569 are disordered. Over residues Glu559 to Lys569 the composition is skewed to basic and acidic residues. A Chromo 2 domain is found at Met590–Ala651. A Helicase ATP-binding domain is found at Arg710 to Glu894. Asp723–Thr730 is an ATP binding site. A DEAH box motif is present at residues Asp845–His848. One can recognise a Helicase C-terminal domain in the interval Leu1026–Leu1191. Disordered regions lie at residues Met1206–Ser1250, Tyr1349–Leu1409, Lys1521–Lys1566, and Thr1595–Asn1692. Acidic residues-rich tracts occupy residues Ser1353–Ser1364 and Ser1374–Glu1383. Gln1388 bears the N5-methylglutamine mark. The span at Thr1547–Leu1561 shows a compositional bias: pro residues. A Phosphoserine modification is found at Ser1552. 3 stretches are compositionally biased toward basic and acidic residues: residues Asp1598–Lys1625, Pro1633–Glu1650, and Asn1657–Thr1672.

It belongs to the SNF2/RAD54 helicase family. As to quaternary structure, component of the nucleosome remodeling and deacetylase (NuRD) repressor complex, composed of core proteins MTA1, MTA2, MTA3, RBBP4, RBBP7, HDAC1, HDAC2, MBD2, MBD3, and peripherally associated proteins CDK2AP1, CDK2AP2, GATAD2A, GATAD2B, CHD3, CHD4 and CHD5. The exact stoichiometry of the NuRD complex is unknown, and some subunits such as MBD2 and MBD3, GATAD2A and GATAD2B, and CHD3, CHD4 and CHD5 define mutually exclusive NuRD complexes. Interacts with HDAC2. Methylated at Gln-1388 by N6AMT1. As to expression, expressed in brain regions enriched in neurons and not in regions rich in glial cells (at protein level).

It localises to the nucleus. It is found in the chromosome. The catalysed reaction is ATP + H2O = ADP + phosphate + H(+). Functionally, ATP-dependent chromatin-remodeling factor that binds DNA through histones and regulates gene transcription. May specifically recognize and bind trimethylated 'Lys-27' (H3K27me3) and non-methylated 'Lys-4' of histone H3. Acts as a component of the histone deacetylase NuRD complex which participates in the remodeling of chromatin. Plays a role in the development of the nervous system by activating the expression of genes promoting neuron terminal differentiation. In parallel, it may also positively regulate the trimethylation of histone H3 at 'Lys-27' thereby specifically repressing genes that promote the differentiation into non-neuronal cell lineages. Regulates the expression of genes involved in cell proliferation and differentiation. Downstream activated genes may include CDKN2A that positively regulates the p53/TP53 pathway, which in turn, prevents cell proliferation. In spermatogenesis, it probably regulates histone hyperacetylation and the replacement of histones by transition proteins in chromatin, a crucial step in the condensation of spermatid chromatin and the production of functional spermatozoa. The protein is Chromodomain-helicase-DNA-binding protein 5 (Chd5) of Rattus norvegicus (Rat).